Here is a 656-residue protein sequence, read N- to C-terminus: Putative L-type lectin-domain containing receptor kinase V.2 (656 aa).

A signal peptide spans 1 to 23 (MSLLLKMLLFSLFFFYMASISQC). Topologically, residues 24–276 (SDPTGGQFSF…EDQERSLSSK (253 aa)) are extracellular. The segment at 29–248 (GQFSFNGYLY…SHYILGWSFN (220 aa)) is legume-lectin like. 5 N-linked (GlcNAc...) asparagine glycosylation sites follow: Asn-78, Asn-124, Asn-159, Asn-190, and Asn-257. A helical membrane pass occupies residues 277–297 (ILAISLSISGVTLVIVLILGV). Over 298–656 (MLFLKRKKFL…MTESFLSSGR (359 aa)) the chain is Cytoplasmic. A Protein kinase domain is found at 334 to 615 (FKNSEVLGKG…GVATLPHNLL (282 aa)). ATP-binding positions include 340 to 348 (LGKGGFGKV) and Lys-363. The active-site Proton acceptor is the Asp-459.

It in the C-terminal section; belongs to the protein kinase superfamily. Ser/Thr protein kinase family. This sequence in the N-terminal section; belongs to the leguminous lectin family.

It localises to the cell membrane. It catalyses the reaction L-seryl-[protein] + ATP = O-phospho-L-seryl-[protein] + ADP + H(+). It carries out the reaction L-threonyl-[protein] + ATP = O-phospho-L-threonyl-[protein] + ADP + H(+). The protein is Putative L-type lectin-domain containing receptor kinase V.2 (LECRK52) of Arabidopsis thaliana (Mouse-ear cress).